A 524-amino-acid polypeptide reads, in one-letter code: GMP synthase [glutamine-hydrolyzing] (524 aa).

Residues 9 to 207 form the Glutamine amidotransferase type-1 domain; sequence RILILDFGSQ…VIHICQCIPN (199 aa). Catalysis depends on cysteine 86, which acts as the Nucleophile. Residues histidine 181 and glutamate 183 contribute to the active site. The 192-residue stretch at 208–399 folds into the GMPS ATP-PPase domain; sequence WTTKHIIEDS…LGLPADLIYR (192 aa). ATP is bound at residue 235–241; sequence SGGVDSA.

As to quaternary structure, homodimer.

The catalysed reaction is XMP + L-glutamine + ATP + H2O = GMP + L-glutamate + AMP + diphosphate + 2 H(+). The protein operates within purine metabolism; GMP biosynthesis; GMP from XMP (L-Gln route): step 1/1. In terms of biological role, catalyzes the synthesis of GMP from XMP. The chain is GMP synthase [glutamine-hydrolyzing] from Coxiella burnetii (strain CbuG_Q212) (Coxiella burnetii (strain Q212)).